The primary structure comprises 194 residues: ATP-dependent Clp protease proteolytic subunit (194 aa).

The active-site Nucleophile is the Ser-98. His-123 is an active-site residue.

Belongs to the peptidase S14 family. As to quaternary structure, fourteen ClpP subunits assemble into 2 heptameric rings which stack back to back to give a disk-like structure with a central cavity, resembling the structure of eukaryotic proteasomes.

It is found in the cytoplasm. It carries out the reaction Hydrolysis of proteins to small peptides in the presence of ATP and magnesium. alpha-casein is the usual test substrate. In the absence of ATP, only oligopeptides shorter than five residues are hydrolyzed (such as succinyl-Leu-Tyr-|-NHMec, and Leu-Tyr-Leu-|-Tyr-Trp, in which cleavage of the -Tyr-|-Leu- and -Tyr-|-Trp bonds also occurs).. Functionally, cleaves peptides in various proteins in a process that requires ATP hydrolysis. Has a chymotrypsin-like activity. Plays a major role in the degradation of misfolded proteins. The sequence is that of ATP-dependent Clp protease proteolytic subunit from Sodalis glossinidius (strain morsitans).